A 148-amino-acid polypeptide reads, in one-letter code: Large ribosomal subunit protein uL15 (148 aa).

The segment covering 1–30 has biased composition (basic residues); it reads MPSRLRKTRKLRGHVSHGHGRIGKHRKHPG. The disordered stretch occupies residues 1–38; that stretch reads MPSRLRKTRKLRGHVSHGHGRIGKHRKHPGGRGNAGGL. At histidine 39 the chain carries (3S)-3-hydroxyhistidine. An N6-acetyllysine mark is found at lysine 47 and lysine 55. The residue at position 68 (serine 68) is a Phosphoserine. Lysine 110 bears the N6-acetyllysine mark.

It belongs to the universal ribosomal protein uL15 family. Post-translationally, hydroxylated on His-39 by MINA.

In Pan troglodytes (Chimpanzee), this protein is Large ribosomal subunit protein uL15 (RPL27A).